The following is a 320-amino-acid chain: Cytochrome c biogenesis protein CcsA (320 aa).

7 helical membrane-spanning segments follow: residues 13–33 (ISFS…FLLV), 46–66 (GMIV…IYSG), 73–93 (LYES…VSYL), 147–167 (MVLG…LLVI), 226–246 (IISL…VWAN), 259–274 (ETWA…IYFH), and 289–309 (VASM…LLGI).

This sequence belongs to the CcmF/CycK/Ccl1/NrfE/CcsA family. In terms of assembly, may interact with Ccs1.

Its subcellular location is the plastid. It localises to the chloroplast thylakoid membrane. Required during biogenesis of c-type cytochromes (cytochrome c6 and cytochrome f) at the step of heme attachment. This is Cytochrome c biogenesis protein CcsA from Gossypium barbadense (Sea Island cotton).